A 155-amino-acid chain; its full sequence is Plastocyanin, chloroplastic (155 aa).

A chloroplast-targeting transit peptide spans 1 to 58 (MAALSSAAVSVPSFAAATPMRSSRSSRMVVRASLGKKAASAAVAMAAGAMLLGGSAMA). In terms of domain architecture, Plastocyanin-like spans 59–155 (QDVLLGANGG…AGMVGKVTVN (97 aa)). Residues His-95, Cys-140, His-143, and Met-148 each contribute to the Cu cation site.

Belongs to the plastocyanin family. It depends on Cu(2+) as a cofactor.

Its subcellular location is the plastid. The protein resides in the chloroplast thylakoid membrane. Participates in electron transfer between P700 and the cytochrome b6-f complex in photosystem I. The protein is Plastocyanin, chloroplastic (PETE) of Hordeum vulgare (Barley).